The following is a 187-amino-acid chain: Peptide deformylase 1 (187 aa).

Cysteine 107 and histidine 149 together coordinate Fe cation. The active site involves glutamate 150. Histidine 153 lines the Fe cation pocket.

The protein belongs to the polypeptide deformylase family. Requires Fe(2+) as cofactor.

It catalyses the reaction N-terminal N-formyl-L-methionyl-[peptide] + H2O = N-terminal L-methionyl-[peptide] + formate. Its function is as follows. Removes the formyl group from the N-terminal Met of newly synthesized proteins. Requires at least a dipeptide for an efficient rate of reaction. N-terminal L-methionine is a prerequisite for activity but the enzyme has broad specificity at other positions. The protein is Peptide deformylase 1 of Nostoc sp. (strain PCC 7120 / SAG 25.82 / UTEX 2576).